The chain runs to 176 residues: Natural cytotoxicity triggering receptor 3 (176 aa).

Positions Met1–Ala18 are cleaved as a signal peptide. An Ig-like domain is found at Leu19–Val126. The Extracellular segment spans residues Leu19–Gly135. Residues Cys39 and Cys108 are joined by a disulfide bond. 2 N-linked (GlcNAc...) asparagine glycosylation sites follow: Asn42 and Asn121. The helical transmembrane segment at Ala136–Val156 threads the bilayer. The Cytoplasmic segment spans residues Gly157–Ser176.

It belongs to the natural cytotoxicity receptor (NCR) family. In terms of assembly, homodimer in the unliganted form. Interacts with CD3Z. Interacts with and is activated by binding to NCR3LG1. Interacts with and is activated by binding to BAG6. Interacts with and is inhibited by binding to LGALS3.

The protein resides in the cell membrane. Its function is as follows. Cell membrane receptor of natural killer/NK cells that is activated by binding of extracellular ligands including BAG6 and NCR3LG1. Stimulates NK cells cytotoxicity toward neighboring cells producing these ligands. It controls, for instance, NK cells cytotoxicity against tumor cells. Engagement of NCR3 by BAG6 also promotes myeloid dendritic cells (DC) maturation, both through killing DCs that did not acquire a mature phenotype, and inducing the release by NK cells of TNFA and IFNG that promote DC maturation. The sequence is that of Natural cytotoxicity triggering receptor 3 (NCR3) from Macaca fascicularis (Crab-eating macaque).